The chain runs to 335 residues: Zinc finger protein 396 (335 aa).

Residues 52–134 enclose the SCAN box domain; sequence RQQFRQFGYQ…TMLEDVEREL (83 aa). 3 consecutive C2H2-type zinc fingers follow at residues 251 to 273, 279 to 301, and 307 to 329; these read QKCD…QRIH, YACD…RRTH, and YKCH…RKRH.

Belongs to the krueppel C2H2-type zinc-finger protein family. Isoforms 1 and 2 can both homo- and hetero-associate. In terms of tissue distribution, expressed strongly in liver, moderately in skeletal muscle and weakly in kidney, pancreas, spleen and prostate.

The protein resides in the nucleus. It is found in the cytoplasm. Functionally, isoform 1 and isoform 2 act as DNA-dependent transcriptional repressors. This Homo sapiens (Human) protein is Zinc finger protein 396 (ZNF396).